The primary structure comprises 401 residues: Probable plasmid-partitioning protein ParB (401 aa).

Residues 232–272 are disordered; that stretch reads KTRGKENARDKAAAVKEEVKPSKKPKADNGEKTPKGRSHEE.

It belongs to the ParB family.

The chain is Probable plasmid-partitioning protein ParB from Xylella fastidiosa (strain 9a5c).